A 257-amino-acid chain; its full sequence is Golgi SNAP receptor complex member 1-2 (257 aa).

At methionine 1–aspartate 235 the chain is on the cytoplasmic side. Asparagine 51 is subject to Phosphoserine. A coiled-coil region spans residues threonine 113–leucine 147. A helical; Anchor for type IV membrane protein membrane pass occupies residues threonine 236–serine 256. Lysine 257 is a topological domain (vesicular).

It belongs to the GOSR1 family. As to quaternary structure, component of several multiprotein Golgi SNARE complexes.

The protein localises to the golgi apparatus membrane. Its subcellular location is the endoplasmic reticulum membrane. Involved in transport from the ER to the Golgi apparatus as well as in intra-Golgi transport. It belongs to a super-family of proteins called t-SNAREs or soluble NSF (N-ethylmaleimide-sensitive factor) attachment protein receptor. The protein is Golgi SNAP receptor complex member 1-2 (GOS12) of Arabidopsis thaliana (Mouse-ear cress).